We begin with the raw amino-acid sequence, 411 residues long: Tyrosine--tRNA ligase (411 aa).

L-tyrosine is bound at residue tyrosine 34. Residues 39–48 carry the 'HIGH' region motif; sequence CTATSLHIGS. Tyrosine 171 and glutamine 175 together coordinate L-tyrosine. The 'KMSKS' region motif lies at 231–235; that stretch reads KMGKT. Lysine 234 lines the ATP pocket. The region spanning 345 to 411 is the S4 RNA-binding domain; the sequence is ISAYELFHEA…GKKRHILVRV (67 aa).

The protein belongs to the class-I aminoacyl-tRNA synthetase family. TyrS type 1 subfamily. Homodimer.

The protein localises to the cytoplasm. It carries out the reaction tRNA(Tyr) + L-tyrosine + ATP = L-tyrosyl-tRNA(Tyr) + AMP + diphosphate + H(+). Its function is as follows. Catalyzes the attachment of tyrosine to tRNA(Tyr) in a two-step reaction: tyrosine is first activated by ATP to form Tyr-AMP and then transferred to the acceptor end of tRNA(Tyr). In Rickettsia massiliae (strain Mtu5), this protein is Tyrosine--tRNA ligase.